The chain runs to 360 residues: Phospho-N-acetylmuramoyl-pentapeptide-transferase (360 aa).

10 consecutive transmembrane segments (helical) span residues 21–41 (YLSFRAIASILTALCLSLWMG), 73–93 (TMGGVMILAAIIITVLMWADL), 94–114 (SNPYVWAVLVVLAGYGAVGFV), 132–152 (WKYFWQSAIALVVAFALYAHG), 168–188 (VMPQLGLLYIVLTYFVIVGTS), 199–219 (GLAIMPTVMVAAGFAVIAWAT), 239–259 (LVVVCTAIVGAGLGFLWFNTY), 263–283 (VFMGDVGSLALGGALGVIAVL), 288–308 (LVLVIMGGVFVMETLSVILQV), and 338–358 (VIVRFWIISMVLVLVGLATLK).

Belongs to the glycosyltransferase 4 family. MraY subfamily. It depends on Mg(2+) as a cofactor.

Its subcellular location is the cell inner membrane. The enzyme catalyses UDP-N-acetyl-alpha-D-muramoyl-L-alanyl-gamma-D-glutamyl-meso-2,6-diaminopimeloyl-D-alanyl-D-alanine + di-trans,octa-cis-undecaprenyl phosphate = di-trans,octa-cis-undecaprenyl diphospho-N-acetyl-alpha-D-muramoyl-L-alanyl-D-glutamyl-meso-2,6-diaminopimeloyl-D-alanyl-D-alanine + UMP. The protein operates within cell wall biogenesis; peptidoglycan biosynthesis. Catalyzes the initial step of the lipid cycle reactions in the biosynthesis of the cell wall peptidoglycan: transfers peptidoglycan precursor phospho-MurNAc-pentapeptide from UDP-MurNAc-pentapeptide onto the lipid carrier undecaprenyl phosphate, yielding undecaprenyl-pyrophosphoryl-MurNAc-pentapeptide, known as lipid I. This is Phospho-N-acetylmuramoyl-pentapeptide-transferase from Vibrio atlanticus (strain LGP32) (Vibrio splendidus (strain Mel32)).